The sequence spans 207 residues: NADH-quinone oxidoreductase subunit A (207 aa).

Helical transmembrane passes span 6–26 (LSAI…LVVP), 62–82 (LVAI…AYAV), and 87–107 (AGWL…IGLV).

It belongs to the complex I subunit 3 family. In terms of assembly, NDH-1 is composed of 14 different subunits. Subunits NuoA, H, J, K, L, M, N constitute the membrane sector of the complex.

It is found in the cell inner membrane. It carries out the reaction a quinone + NADH + 5 H(+)(in) = a quinol + NAD(+) + 4 H(+)(out). Functionally, NDH-1 shuttles electrons from NADH, via FMN and iron-sulfur (Fe-S) centers, to quinones in the respiratory chain. The immediate electron acceptor for the enzyme in this species is believed to be ubiquinone. Couples the redox reaction to proton translocation (for every two electrons transferred, four hydrogen ions are translocated across the cytoplasmic membrane), and thus conserves the redox energy in a proton gradient. The chain is NADH-quinone oxidoreductase subunit A from Psychrobacter cryohalolentis (strain ATCC BAA-1226 / DSM 17306 / VKM B-2378 / K5).